A 285-amino-acid polypeptide reads, in one-letter code: Probable cobalamin biosynthesis protein CobD (285 aa).

The next 4 membrane-spanning stretches (helical) occupy residues 10-32 (LIDLMFGEPPAIIHPVVGFGKVI), 45-67 (YLDFLVGAISSLVVIGLAFILSH), 145-167 (VIAPLFYYLIFGLPGAVVYRAVN), and 266-283 (VYWIIVVEFLLIVAIILY).

This sequence belongs to the CobD/CbiB family.

The protein localises to the cell membrane. The protein operates within cofactor biosynthesis; adenosylcobalamin biosynthesis. Its function is as follows. Converts cobyric acid to cobinamide by the addition of aminopropanol on the F carboxylic group. The protein is Probable cobalamin biosynthesis protein CobD of Pyrococcus furiosus (strain ATCC 43587 / DSM 3638 / JCM 8422 / Vc1).